The sequence spans 682 residues: Potassium-transporting ATPase ATP-binding subunit (682 aa).

4 helical membrane-spanning segments follow: residues V35 to A55, T62 to A82, I219 to L239, and V254 to I274. D307 (4-aspartylphosphate intermediate) is an active-site residue. ATP is bound by residues D344, E348, F377–S384, and K395. Mg(2+) is bound by residues D518 and D522. The next 3 helical transmembrane spans lie at T577–A597, A616–L636, and I656–L676.

It belongs to the cation transport ATPase (P-type) (TC 3.A.3) family. Type IA subfamily. In terms of assembly, the system is composed of three essential subunits: KdpA, KdpB and KdpC.

It is found in the cell inner membrane. It carries out the reaction K(+)(out) + ATP + H2O = K(+)(in) + ADP + phosphate + H(+). Functionally, part of the high-affinity ATP-driven potassium transport (or Kdp) system, which catalyzes the hydrolysis of ATP coupled with the electrogenic transport of potassium into the cytoplasm. This subunit is responsible for energy coupling to the transport system and for the release of the potassium ions to the cytoplasm. This chain is Potassium-transporting ATPase ATP-binding subunit, found in Erwinia tasmaniensis (strain DSM 17950 / CFBP 7177 / CIP 109463 / NCPPB 4357 / Et1/99).